The sequence spans 177 residues: MSIDLQQDFFALFGLPRRFRVDEAALEMAYHDLQGQVHPDRFAHLPDVEKRLSMQWATRVNEGFRTLRKPLPRAQYMLELAGVDAGLHTNTAMSSAFLMEQMEWREAVEEARAAGEGHELTQLHHRLRHHAREVFDELERTIDERHDFAAAAEIVRRLMFMEKIQHEIDDALEALET.

Residues 8–80 enclose the J domain; sequence DFFALFGLPR…LPRAQYMLEL (73 aa).

The protein belongs to the HscB family. As to quaternary structure, interacts with HscA and stimulates its ATPase activity.

Functionally, co-chaperone involved in the maturation of iron-sulfur cluster-containing proteins. Seems to help targeting proteins to be folded toward HscA. The protein is Co-chaperone protein HscB homolog of Aromatoleum aromaticum (strain DSM 19018 / LMG 30748 / EbN1) (Azoarcus sp. (strain EbN1)).